The sequence spans 297 residues: 4-hydroxy-tetrahydrodipicolinate synthase (297 aa).

Pyruvate is bound at residue T47. Y135 functions as the Proton donor/acceptor in the catalytic mechanism. Residue K163 is the Schiff-base intermediate with substrate of the active site. Pyruvate is bound at residue I205.

This sequence belongs to the DapA family. As to quaternary structure, homotetramer; dimer of dimers.

The protein resides in the cytoplasm. It carries out the reaction L-aspartate 4-semialdehyde + pyruvate = (2S,4S)-4-hydroxy-2,3,4,5-tetrahydrodipicolinate + H2O + H(+). It functions in the pathway amino-acid biosynthesis; L-lysine biosynthesis via DAP pathway; (S)-tetrahydrodipicolinate from L-aspartate: step 3/4. Functionally, catalyzes the condensation of (S)-aspartate-beta-semialdehyde [(S)-ASA] and pyruvate to 4-hydroxy-tetrahydrodipicolinate (HTPA). This chain is 4-hydroxy-tetrahydrodipicolinate synthase, found in Dehalococcoides mccartyi (strain CBDB1).